The sequence spans 682 residues: Potassium-transporting ATPase ATP-binding subunit (682 aa).

A run of 4 helical transmembrane segments spans residues 34 to 54 (PVMF…LAMV), 58 to 78 (IAGS…TVLF), 219 to 239 (IALT…TATL), and 254 to 274 (VLVA…LSAI). Residue Asp-307 is the 4-aspartylphosphate intermediate of the active site. ATP contacts are provided by residues Asp-344, Glu-348, 377-384 (FTAQSRMS), and Lys-395. Mg(2+) contacts are provided by Asp-518 and Asp-522. Transmembrane regions (helical) follow at residues 588-608 (FAII…LNVM), 616-636 (AILS…PLAL), and 662-682 (LVVP…LGLA).

Belongs to the cation transport ATPase (P-type) (TC 3.A.3) family. Type IA subfamily. The system is composed of three essential subunits: KdpA, KdpB and KdpC.

The protein resides in the cell inner membrane. The catalysed reaction is K(+)(out) + ATP + H2O = K(+)(in) + ADP + phosphate + H(+). Its function is as follows. Part of the high-affinity ATP-driven potassium transport (or Kdp) system, which catalyzes the hydrolysis of ATP coupled with the electrogenic transport of potassium into the cytoplasm. This subunit is responsible for energy coupling to the transport system and for the release of the potassium ions to the cytoplasm. The chain is Potassium-transporting ATPase ATP-binding subunit from Salmonella choleraesuis (strain SC-B67).